A 401-amino-acid chain; its full sequence is Probable tRNA sulfurtransferase (401 aa).

The 106-residue stretch at 60-165 folds into the THUMP domain; it reads EEICSLLKNI…EEATFLTIRN (106 aa). ATP contacts are provided by residues 183-184, 208-209, Arg265, Gly287, and Gln296; these read ML and HF.

The protein belongs to the ThiI family.

It localises to the cytoplasm. The catalysed reaction is [ThiI sulfur-carrier protein]-S-sulfanyl-L-cysteine + a uridine in tRNA + 2 reduced [2Fe-2S]-[ferredoxin] + ATP + H(+) = [ThiI sulfur-carrier protein]-L-cysteine + a 4-thiouridine in tRNA + 2 oxidized [2Fe-2S]-[ferredoxin] + AMP + diphosphate. The enzyme catalyses [ThiS sulfur-carrier protein]-C-terminal Gly-Gly-AMP + S-sulfanyl-L-cysteinyl-[cysteine desulfurase] + AH2 = [ThiS sulfur-carrier protein]-C-terminal-Gly-aminoethanethioate + L-cysteinyl-[cysteine desulfurase] + A + AMP + 2 H(+). It functions in the pathway cofactor biosynthesis; thiamine diphosphate biosynthesis. Functionally, catalyzes the ATP-dependent transfer of a sulfur to tRNA to produce 4-thiouridine in position 8 of tRNAs, which functions as a near-UV photosensor. Also catalyzes the transfer of sulfur to the sulfur carrier protein ThiS, forming ThiS-thiocarboxylate. This is a step in the synthesis of thiazole, in the thiamine biosynthesis pathway. The sulfur is donated as persulfide by IscS. This chain is Probable tRNA sulfurtransferase, found in Bacillus velezensis (strain DSM 23117 / BGSC 10A6 / LMG 26770 / FZB42) (Bacillus amyloliquefaciens subsp. plantarum).